We begin with the raw amino-acid sequence, 260 residues long: Neuraminyllactose-binding hemagglutinin (260 aa).

Residues 1–27 (MRANNHFKDFAWKKCLLGASVVALLVG) form the signal peptide. Cys28 carries N-palmitoyl cysteine lipidation. Cys28 is lipidated: S-diacylglycerol cysteine. The segment at 134–139 (KRTIQK) is N-acetyl-neuraminyl-alpha(2,3)-lactose binding motif.

The protein localises to the cell outer membrane. This chain is Neuraminyllactose-binding hemagglutinin (hpaA), found in Helicobacter pylori (Campylobacter pylori).